The sequence spans 157 residues: Peptide methionine sulfoxide reductase MsrA (157 aa).

The active site involves Cys10.

This sequence belongs to the MsrA Met sulfoxide reductase family.

The enzyme catalyses L-methionyl-[protein] + [thioredoxin]-disulfide + H2O = L-methionyl-(S)-S-oxide-[protein] + [thioredoxin]-dithiol. It catalyses the reaction [thioredoxin]-disulfide + L-methionine + H2O = L-methionine (S)-S-oxide + [thioredoxin]-dithiol. Its function is as follows. Has an important function as a repair enzyme for proteins that have been inactivated by oxidation. Catalyzes the reversible oxidation-reduction of methionine sulfoxide in proteins to methionine. The sequence is that of Peptide methionine sulfoxide reductase MsrA from Clostridium botulinum (strain Kyoto / Type A2).